The primary structure comprises 247 residues: Carboxy-S-adenosyl-L-methionine synthase (247 aa).

S-adenosyl-L-methionine contacts are provided by residues Tyr39, 64–66 (GCS), 89–90 (DN), 117–118 (DI), Asn132, and Arg199.

Belongs to the class I-like SAM-binding methyltransferase superfamily. Cx-SAM synthase family. As to quaternary structure, homodimer.

The enzyme catalyses prephenate + S-adenosyl-L-methionine = carboxy-S-adenosyl-L-methionine + 3-phenylpyruvate + H2O. Catalyzes the conversion of S-adenosyl-L-methionine (SAM) to carboxy-S-adenosyl-L-methionine (Cx-SAM). The sequence is that of Carboxy-S-adenosyl-L-methionine synthase from Salmonella enteritidis PT4 (strain P125109).